Reading from the N-terminus, the 199-residue chain is 7-methyl-GTP pyrophosphatase (199 aa).

Residue D76 is the Proton acceptor of the active site.

The protein belongs to the Maf family. YceF subfamily. The cofactor is a divalent metal cation.

It is found in the cytoplasm. The catalysed reaction is N(7)-methyl-GTP + H2O = N(7)-methyl-GMP + diphosphate + H(+). Nucleoside triphosphate pyrophosphatase that hydrolyzes 7-methyl-GTP (m(7)GTP). May have a dual role in cell division arrest and in preventing the incorporation of modified nucleotides into cellular nucleic acids. This Brucella abortus biovar 1 (strain 9-941) protein is 7-methyl-GTP pyrophosphatase.